The sequence spans 357 residues: Major outer membrane protein P.IB (357 aa).

An N-terminal signal peptide occupies residues 1–19 (MKKSLIALTLAALPVAAMA).

This sequence belongs to the Gram-negative porin family. In terms of assembly, homotrimer.

Its subcellular location is the cell outer membrane. Functionally, serves as a slightly cation selective porin. The protein is Major outer membrane protein P.IB (por) of Neisseria sicca.